Here is a 289-residue protein sequence, read N- to C-terminus: Ribosomal RNA small subunit methyltransferase I (289 aa).

Belongs to the methyltransferase superfamily. RsmI family.

The protein resides in the cytoplasm. It carries out the reaction cytidine(1402) in 16S rRNA + S-adenosyl-L-methionine = 2'-O-methylcytidine(1402) in 16S rRNA + S-adenosyl-L-homocysteine + H(+). Catalyzes the 2'-O-methylation of the ribose of cytidine 1402 (C1402) in 16S rRNA. The protein is Ribosomal RNA small subunit methyltransferase I of Halalkalibacterium halodurans (strain ATCC BAA-125 / DSM 18197 / FERM 7344 / JCM 9153 / C-125) (Bacillus halodurans).